Here is a 968-residue protein sequence, read N- to C-terminus: RNA polymerase-associated protein RapA (968 aa).

The 171-residue stretch at 164 to 334 folds into the Helicase ATP-binding domain; sequence DVGRRHAPRV…FARLRLLDPN (171 aa). Residue 177-184 participates in ATP binding; it reads DEVGLGKT. The short motif at 280-283 is the DEAH box element; that stretch reads DEAH. The Helicase C-terminal domain maps to 490 to 662; the sequence is RVEWLMGYLT…YLASPDQTEG (173 aa).

Belongs to the SNF2/RAD54 helicase family. RapA subfamily. As to quaternary structure, interacts with the RNAP. Has a higher affinity for the core RNAP than for the holoenzyme. Its ATPase activity is stimulated by binding to RNAP.

Functionally, transcription regulator that activates transcription by stimulating RNA polymerase (RNAP) recycling in case of stress conditions such as supercoiled DNA or high salt concentrations. Probably acts by releasing the RNAP, when it is trapped or immobilized on tightly supercoiled DNA. Does not activate transcription on linear DNA. Probably not involved in DNA repair. The chain is RNA polymerase-associated protein RapA from Shigella dysenteriae serotype 1 (strain Sd197).